A 412-amino-acid chain; its full sequence is 23S rRNA (uracil(747)-C(5))-methyltransferase (412 aa).

Cysteine 63, cysteine 69, cysteine 72, and cysteine 139 together coordinate [4Fe-4S] cluster. S-adenosyl-L-methionine-binding residues include glutamine 255, tyrosine 281, glutamate 302, and aspartate 343. Cysteine 369 functions as the Nucleophile in the catalytic mechanism.

It belongs to the class I-like SAM-binding methyltransferase superfamily. RNA M5U methyltransferase family.

It catalyses the reaction uridine(747) in 23S rRNA + S-adenosyl-L-methionine = 5-methyluridine(747) in 23S rRNA + S-adenosyl-L-homocysteine + H(+). Catalyzes the formation of 5-methyl-uridine at position equivalent to 747 (m5U747) in 23S rRNA. The polypeptide is 23S rRNA (uracil(747)-C(5))-methyltransferase (Pyrococcus horikoshii (strain ATCC 700860 / DSM 12428 / JCM 9974 / NBRC 100139 / OT-3)).